Consider the following 177-residue polypeptide: Large ribosomal subunit protein uL5 (177 aa).

This sequence belongs to the universal ribosomal protein uL5 family. Part of the 50S ribosomal subunit; part of the 5S rRNA/L5/L18/L25 subcomplex. Contacts the 5S rRNA and the P site tRNA. Forms a bridge to the 30S subunit in the 70S ribosome.

This is one of the proteins that bind and probably mediate the attachment of the 5S RNA into the large ribosomal subunit, where it forms part of the central protuberance. In the 70S ribosome it contacts protein S13 of the 30S subunit (bridge B1b), connecting the 2 subunits; this bridge is implicated in subunit movement. Contacts the P site tRNA; the 5S rRNA and some of its associated proteins might help stabilize positioning of ribosome-bound tRNAs. In Wolbachia pipientis wMel, this protein is Large ribosomal subunit protein uL5.